Here is an 802-residue protein sequence, read N- to C-terminus: Probable inactive leucine-rich repeat receptor-like protein kinase At3g03770 (802 aa).

An N-terminal signal peptide occupies residues 1–26 (MEKLYCGMPLLLLVLLLASIDGSTQL). At 27–391 (QSSQSQTLLR…RNKVSKVGIA (365 aa)) the chain is on the extracellular side. N-linked (GlcNAc...) asparagine glycans are attached at residues N52 and N83. LRR repeat units lie at residues 71-94 (EDSVTQLHIIGDNGTHMLPKSFSI), 104-128 (LPDVKVLTFVSLGLWGWLPQKINRL), 129-152 (SSLEILNVSSNFLFGPIPHELSSL), 153-176 (ATLQTLILDENMFSGELPDWIDSL), 177-200 (PSLAVLSLRKNVLNGSLPSSLSSL), 201-225 (SGLRVLALANNRFNGALPDLSHLTN), 227-244 (QVLDLEGNSFGPLFPRLS), 245-268 (NKLVTLILSKNKFRSAVSAEEVSS), 269-293 (LYQLQHLDLSYNTFVGPFPTSLMSL), 294-317 (PAITYLNISHNKLTGRLSANLSCN), and 319-341 (QLMFVDMSSNLLTGSLPTCLKPS). N135 carries N-linked (GlcNAc...) asparagine glycosylation. N190 carries an N-linked (GlcNAc...) asparagine glycan. Residues N300 and N313 are each glycosylated (N-linked (GlcNAc...) asparagine). A helical transmembrane segment spans residues 392-412 (LGVTASILGVLLLAGALFVVL). Residues 413–802 (RRLNAKKTVT…RDSGCEEHER (390 aa)) are Cytoplasmic-facing. The Protein kinase domain occupies 477–759 (FESSAFMGEG…FASQVQEGWL (283 aa)). The disordered stretch occupies residues 761 to 802 (NSNPSSNLGSPSPAASSLPPPSRLHVTTLESPRDSGCEEHER). The span at 762–777 (SNPSSNLGSPSPAASS) shows a compositional bias: low complexity. Residues 791–802 (SPRDSGCEEHER) show a composition bias toward basic and acidic residues.

This sequence belongs to the protein kinase superfamily. Ser/Thr protein kinase family.

It localises to the cell membrane. This Arabidopsis thaliana (Mouse-ear cress) protein is Probable inactive leucine-rich repeat receptor-like protein kinase At3g03770.